Here is a 364-residue protein sequence, read N- to C-terminus: UDP-N-acetylglucosamine--N-acetylmuramyl-(pentapeptide) pyrophosphoryl-undecaprenol N-acetylglucosamine transferase (364 aa).

UDP-N-acetyl-alpha-D-glucosamine contacts are provided by residues 10–12 (TGG), asparagine 124, serine 195, isoleucine 250, and glutamine 295.

This sequence belongs to the glycosyltransferase 28 family. MurG subfamily.

The protein resides in the cell membrane. The catalysed reaction is di-trans,octa-cis-undecaprenyl diphospho-N-acetyl-alpha-D-muramoyl-L-alanyl-D-glutamyl-meso-2,6-diaminopimeloyl-D-alanyl-D-alanine + UDP-N-acetyl-alpha-D-glucosamine = di-trans,octa-cis-undecaprenyl diphospho-[N-acetyl-alpha-D-glucosaminyl-(1-&gt;4)]-N-acetyl-alpha-D-muramoyl-L-alanyl-D-glutamyl-meso-2,6-diaminopimeloyl-D-alanyl-D-alanine + UDP + H(+). It participates in cell wall biogenesis; peptidoglycan biosynthesis. Its function is as follows. Cell wall formation. Catalyzes the transfer of a GlcNAc subunit on undecaprenyl-pyrophosphoryl-MurNAc-pentapeptide (lipid intermediate I) to form undecaprenyl-pyrophosphoryl-MurNAc-(pentapeptide)GlcNAc (lipid intermediate II). The chain is UDP-N-acetylglucosamine--N-acetylmuramyl-(pentapeptide) pyrophosphoryl-undecaprenol N-acetylglucosamine transferase from Bacillus cytotoxicus (strain DSM 22905 / CIP 110041 / 391-98 / NVH 391-98).